Consider the following 493-residue polypeptide: Glutamyl-tRNA(Gln) amidotransferase subunit A (493 aa).

Active-site charge relay system residues include Lys78 and Ser158. Ser182 acts as the Acyl-ester intermediate in catalysis.

Belongs to the amidase family. GatA subfamily. As to quaternary structure, heterotrimer of A, B and C subunits.

The enzyme catalyses L-glutamyl-tRNA(Gln) + L-glutamine + ATP + H2O = L-glutaminyl-tRNA(Gln) + L-glutamate + ADP + phosphate + H(+). Its function is as follows. Allows the formation of correctly charged Gln-tRNA(Gln) through the transamidation of misacylated Glu-tRNA(Gln) in organisms which lack glutaminyl-tRNA synthetase. The reaction takes place in the presence of glutamine and ATP through an activated gamma-phospho-Glu-tRNA(Gln). This is Glutamyl-tRNA(Gln) amidotransferase subunit A from Methylorubrum extorquens (strain CM4 / NCIMB 13688) (Methylobacterium extorquens).